We begin with the raw amino-acid sequence, 184 residues long: Ribosome-recycling factor (184 aa).

The interval 133–153 (DSNDELKKQQKNSDITEDDLR) is disordered.

The protein belongs to the RRF family.

The protein resides in the cytoplasm. In terms of biological role, responsible for the release of ribosomes from messenger RNA at the termination of protein biosynthesis. May increase the efficiency of translation by recycling ribosomes from one round of translation to another. In Staphylococcus saprophyticus subsp. saprophyticus (strain ATCC 15305 / DSM 20229 / NCIMB 8711 / NCTC 7292 / S-41), this protein is Ribosome-recycling factor.